Here is a 395-residue protein sequence, read N- to C-terminus: Bone morphogenetic protein 2 (395 aa).

Positions 1 to 23 (MVAGTRCLLALLLPQVLLGGAAG) are cleaved as a signal peptide. Residues 24-281 (LIPELGRRKF…GHPLHRREKR (258 aa)) constitute a propeptide, cleaved by PCSK5. At Ser86 the chain carries Phosphoserine. N-linked (GlcNAc...) asparagine glycosylation is found at Asn134 and Asn199. Residues 270-292 (GKGHPLHRREKRQAKHKQRKRLK) form a disordered region. Residues 273 to 292 (HPLHRREKRQAKHKQRKRLK) show a composition bias toward basic residues. 3 cysteine pairs are disulfide-bonded: Cys295–Cys360, Cys324–Cys392, and Cys328–Cys394. Residue Asn337 is glycosylated (N-linked (GlcNAc...) asparagine).

Belongs to the TGF-beta family. As to quaternary structure, homodimer; disulfide-linked. Interacts with SOSTDC1. Interacts with GREM2, RGMA, RGMB and RGMC. Interacts with ASPN. Interacts with MAFP5. Interacts with FBN1 (via N-terminal domain) and FBN2. Interacts with type I receptor BMPR1A. Interacts with type II receptor BMPR2. Interacts with SCUBE3. Interacts with TNFAIP6 (primarily via Link domain); this interaction is inhibited by hyaluronan. Interacts with ERFE. Interacts with BMPR1A/ALK3; the interaction may induce HAMP expression. Forms heterodimers with BMP6 in vitro; the heterodimer then binds to its receptor BMPR1A /ALK3 and may induce HAMP expression. Interacts with TGFBR3.

The protein resides in the secreted. Functionally, growth factor of the TGF-beta superfamily that plays essential roles in many developmental processes, including cardiogenesis, neurogenesis, and osteogenesis. Induces cartilage and bone formation. Initiates the canonical BMP signaling cascade by associating with type I receptor BMPR1A and type II receptor BMPR2. Once all three components are bound together in a complex at the cell surface, BMPR2 phosphorylates and activates BMPR1A. In turn, BMPR1A propagates signal by phosphorylating SMAD1/5/8 that travel to the nucleus and act as activators and repressors of transcription of target genes. Also acts to promote expression of HAMP, via the interaction with its receptor BMPR1A/ALK3. Can also signal through non-canonical pathways such as ERK/MAP kinase signaling cascade that regulates osteoblast differentiation. Also stimulates the differentiation of myoblasts into osteoblasts via the EIF2AK3-EIF2A-ATF4 pathway by stimulating EIF2A phosphorylation which leads to increased expression of ATF4 which plays a central role in osteoblast differentiation. Acts as a positive regulator of odontoblast differentiation during mesenchymal tooth germ formation, expression is repressed during the bell stage by MSX1-mediated inhibition of CTNNB1 signaling. The protein is Bone morphogenetic protein 2 (BMP2) of Oryctolagus cuniculus (Rabbit).